Here is a 208-residue protein sequence, read N- to C-terminus: Protein-L-isoaspartate O-methyltransferase (208 aa).

Serine 59 is an active-site residue.

It belongs to the methyltransferase superfamily. L-isoaspartyl/D-aspartyl protein methyltransferase family.

It is found in the cytoplasm. The catalysed reaction is [protein]-L-isoaspartate + S-adenosyl-L-methionine = [protein]-L-isoaspartate alpha-methyl ester + S-adenosyl-L-homocysteine. Catalyzes the methyl esterification of L-isoaspartyl residues in peptides and proteins that result from spontaneous decomposition of normal L-aspartyl and L-asparaginyl residues. It plays a role in the repair and/or degradation of damaged proteins. This Vibrio cholerae serotype O1 (strain ATCC 39541 / Classical Ogawa 395 / O395) protein is Protein-L-isoaspartate O-methyltransferase.